The sequence spans 205 residues: High frequency lysogenization protein HflD homolog (205 aa).

Belongs to the HflD family.

It localises to the cytoplasm. The protein resides in the cell inner membrane. In Shewanella pealeana (strain ATCC 700345 / ANG-SQ1), this protein is High frequency lysogenization protein HflD homolog.